Consider the following 247-residue polypeptide: Caffeoyl-CoA O-methyltransferase (247 aa).

Position 21 (lysine 21) interacts with substrate. S-adenosyl-L-methionine is bound by residues threonine 63, glutamate 85, 87 to 88, serine 93, aspartate 111, and alanine 140; that span reads GV. A substrate-binding site is contributed by aspartate 163. Aspartate 163 is an a divalent metal cation binding site. Aspartate 165 is a binding site for S-adenosyl-L-methionine. A divalent metal cation contacts are provided by aspartate 189 and asparagine 190. Position 194 (asparagine 194) interacts with substrate.

The protein belongs to the class I-like SAM-binding methyltransferase superfamily. Cation-dependent O-methyltransferase family. CCoAMT subfamily. Homodimer. Ca(2+) serves as cofactor. The cofactor is Mg(2+). Zn(2+) is required as a cofactor.

The enzyme catalyses (E)-caffeoyl-CoA + S-adenosyl-L-methionine = (E)-feruloyl-CoA + S-adenosyl-L-homocysteine + H(+). The protein operates within aromatic compound metabolism; phenylpropanoid biosynthesis. Functionally, methylates caffeoyl-CoA to feruloyl-CoA and 5-hydroxyferuloyl-CoA to sinapoyl-CoA. Plays a role in the synthesis of feruloylated polysaccharides. Involved in the reinforcement of the plant cell wall. Also involved in the responding to wounding or pathogen challenge by the increased formation of cell wall-bound ferulic acid polymers. This chain is Caffeoyl-CoA O-methyltransferase (CCOMT), found in Medicago sativa (Alfalfa).